Reading from the N-terminus, the 4065-residue chain is Polyketide synthase-nonribosomal peptide synthetase pyiS (4065 aa).

The region spanning 6–440 is the Ketosynthase family 3 (KS3) domain; it reads SEPVAIIGTG…GANCHAILEA (435 aa). Residues C179, H314, and H360 each act as for beta-ketoacyl synthase activity in the active site. Residues 552-875 are acyl transferase; that stretch reads IFTGQGAQWP…PYTGVLSRGK (324 aa). Residues 950-1087 form an N-terminal hotdog fold region; it reads NELLGRQILD…CDVLVTYGDS (138 aa). In terms of domain architecture, PKS/mFAS DH spans 950–1260; the sequence is NELLGRQILD…TQPLFNPTEA (311 aa). Residues 951 to 1254 form a dehydratase (DH) domain region; sequence ELLGRQILDG…QVEGLQTQPL (304 aa). H982 (proton acceptor; for dehydratase activity) is an active-site residue. Positions 1102–1260 are C-terminal hotdog fold; that stretch reads EYFMLGVESD…TQPLFNPTEA (159 aa). D1166 functions as the Proton donor; for dehydratase activity in the catalytic mechanism. Positions 1409-1593 are methyltransferase (MT) domain; the sequence is AHGMPRYTKY…KQTGFSGIDT (185 aa). The ketoreductase (KR)domain stretch occupies residues 2129–2302; that stretch reads TYWLVGLSGT…NASVVHIGAI (174 aa). The Carrier 1 domain occupies 2411-2492; the sequence is INSAEVYEII…EILETAQQLL (82 aa). S2452 is subject to O-(pantetheine 4'-phosphoryl)serine. Residues 2497–2561 are disordered; sequence LPKMDPNDKS…GAKKGETVSK (65 aa). Residues 2551-2561 are compositionally biased toward basic and acidic residues; sequence SGAKKGETVSK. The condensation stretch occupies residues 2645–3076; sequence SKKTPISFAQ…FSRNQALRLA (432 aa). The adenylation stretch occupies residues 3112–3516; the sequence is DIAKQKSHSL…RLLLEGRIAD (405 aa). A Carrier 2 domain is found at 3634 to 3714; that stretch reads QDLNDTESRL…DMAALVDELS (81 aa). S3674 bears the O-(pantetheine 4'-phosphoryl)serine mark. Positions 3760-3975 are reductase-like; the sequence is LTGSTGFLGR…LDFISVDEAA (216 aa).

Belongs to the NRP synthetase family.

It participates in mycotoxin biosynthesis. Its function is as follows. Hybrid PKS-NRPS synthetase; part of the gene cluster that mediates the biosynthesis of the mycotoxin pyrichalasin H, a tyrosine-derived cytochalasan that inhibits the growth of rice seedlings, but also inhibits lymphocyte capping and actin polymerization and alters cell morphology. Pyrichalasin H is indicated as the responsible agent for the genus-specific pathogenicity of M.grisea toward crabgrass. The first step in the pathway is catalyzed by the O-methyltransferase pyiA which methylates free tyrosine to generate the precursor O-methyltyrosine. The hybrid PKS-NRPS pyiS, assisted by the enoyl reductase pyiC, are responsible for fusion of the O-methyltyrosine precursor and the polyketide backbone. The polyketide synthase module (PKS) of pyiS is responsible for the synthesis of the polyketide backbone and the downstream nonribosomal peptide synthetase (NRPS) amidates the carboxyl end of the polyketide with the O-methyltyrosine precursor. As the NRPS A-domain demonstrates substrate tolerance, pyiS can also use phenylalanine, tyrosine and even para-chlorophenylalanine as amino acid precursor, which leads to the production of novel cytochalasans, including halogenated cytochalasans. Because pyiS lacks a designated enoylreductase (ER) domain, the required activity is provided the enoyl reductase pyiC. Reduction by the hydrolyase pyiE leads to 1,5-dihydropyrrolone, which is substrate for dehydration and intra-molecular Diels-Alder cyclization by the Diels-Alderase pyiF to yield the required isoindolone-fused macrocycle. The tailoring cytochrome P450 monooxygenases piyD and piyG catalyze the hydroxylation at C-18 and C-7, respectivily, whereas the short-chain dehydrogenase/reductase pyiH reduces the carbonyl at C-21 in preparation for the transfer of an acetyl group by the acetyltransferase pyiB. These 3 reactions whose order is not clear yet, lead to the production of O-methylpyrichalasin J, a deacetylated pyrichalasin H. Finally, pyiB to converts O-methylpyrichalasin J into the final product pyrichalasin H via acetylation of C-21. This chain is Polyketide synthase-nonribosomal peptide synthetase pyiS, found in Pyricularia grisea (Crabgrass-specific blast fungus).